A 528-amino-acid chain; its full sequence is Major facilitator superfamily multidrug transporter mdr3 (528 aa).

The tract at residues 1 to 37 (MLAMAASAEETNRQSNAGRRSVISPSEAPPEAEQSDV) is disordered. Helical transmembrane passes span 50–70 (FILI…YILI), 91–111 (WHVG…GKLG), 119–139 (ILVL…CSAF), 149–169 (ARAL…AIAG), 180–200 (MIFS…GVVG), 211–231 (WVMW…LWVI), and 241–261 (AATL…LLLL). An N-linked (GlcNAc...) asparagine glycan is attached at Asn-262. 5 helical membrane passes run 272–292 (GWST…LGLF), 340–360 (VITS…GCIL), 375–395 (FWSF…STTI), 410–430 (SLVN…AGTV), and 448–468 (ALWS…VFAV).

This sequence belongs to the major facilitator superfamily.

The protein localises to the cell membrane. Its function is as follows. Major facilitator superfamily transporter that confers resistance to azoles such as itraconazole. The polypeptide is Major facilitator superfamily multidrug transporter mdr3 (Aspergillus fumigatus (strain ATCC MYA-4609 / CBS 101355 / FGSC A1100 / Af293) (Neosartorya fumigata)).